The chain runs to 354 residues: UDP-3-O-acylglucosamine N-acyltransferase (354 aa).

The active-site Proton acceptor is His-258.

Belongs to the transferase hexapeptide repeat family. LpxD subfamily. In terms of assembly, homotrimer.

It catalyses the reaction a UDP-3-O-[(3R)-3-hydroxyacyl]-alpha-D-glucosamine + a (3R)-hydroxyacyl-[ACP] = a UDP-2-N,3-O-bis[(3R)-3-hydroxyacyl]-alpha-D-glucosamine + holo-[ACP] + H(+). It functions in the pathway bacterial outer membrane biogenesis; LPS lipid A biosynthesis. In terms of biological role, catalyzes the N-acylation of UDP-3-O-acylglucosamine using 3-hydroxyacyl-ACP as the acyl donor. Is involved in the biosynthesis of lipid A, a phosphorylated glycolipid that anchors the lipopolysaccharide to the outer membrane of the cell. The chain is UDP-3-O-acylglucosamine N-acyltransferase from Sinorhizobium medicae (strain WSM419) (Ensifer medicae).